Here is a 1730-residue protein sequence, read N- to C-terminus: Nebulin-related-anchoring protein (1730 aa).

An LIM zinc-binding domain is found at Gln-4–Phe-64. 44 Nebulin repeats span residues Thr-63 to Ser-97, Glu-156 to Gly-166, Thr-175 to Ser-202, Arg-203 to Gly-237, Thr-246 to Arg-273, Tyr-298 to Gly-307, Thr-316 to Gly-343, His-348 to Gly-382, Glu-389 to Arg-417, Arg-419 to Val-453, Lys-487 to Leu-521, Asn-522 to Gly-556, Gly-558 to Gly-592, Leu-602 to Thr-626, Arg-627 to Val-661, Leu-662 to Gly-692, Asn-702 to Glu-724, Lys-726 to His-760, Gln-761 to Ala-795, Gly-797 to Gly-831, Gln-844 to Ser-869, Gln-870 to Lys-896, His-901 to Gly-935, Asn-945 to Gln-963, Lys-969 to His-1003, His-1004 to Asp-1038, Gly-1040 to Gly-1074, Gly-1078 to Ala-1112, Gln-1113 to Lys-1139, Gln-1144 to Gly-1178, Ile-1183 to Gln-1206, Lys-1212 to His-1246, Glu-1247 to Ala-1281, Gly-1283 to Gly-1317, Gly-1321 to Ala-1355, Gln-1356 to Ala-1390, Leu-1391 to Gly-1421, Ser-1429 to Lys-1449, Lys-1455 to Arg-1481, Arg-1490 to Ala-1524, Ser-1526 to Gly-1560, Gly-1564 to Ser-1598, Gln-1599 to Gln-1626, and Leu-1640 to Gly-1664. Ser-1081 carries the phosphoserine modification. Positions Lys-1595–Ser-1620 are disordered. Positions Ser-1596–Gln-1606 are enriched in polar residues.

In terms of assembly, interacts with actin, alpha-actinin, KLHL41, TLN1 and VCL. Interacts with CSRP3. In terms of tissue distribution, expressed in cardiac and skeletal muscle.

Its function is as follows. May be involved in anchoring the terminal actin filaments in the myofibril to the membrane and in transmitting tension from the myofibrils to the extracellular matrix. This chain is Nebulin-related-anchoring protein, found in Homo sapiens (Human).